Reading from the N-terminus, the 2157-residue chain is Unconventional myosin-IXb (2157 aa).

An N-acetylserine modification is found at serine 2. A Ras-associating domain is found at 15–114; the sequence is AAYHLHIYPQ…YYFLLQERNA (100 aa). Residues 146 to 953 form the Myosin motor domain; sequence ADFDDLCNLP…ERQALQETLH (808 aa). Position 239–246 (239–246) interacts with ATP; that stretch reads GESGSGKT. The tract at residues 709–734 is disordered; it reads AEKAAGMSSPGAQSHPEELPRGASTP. Phosphoserine is present on residues serine 716 and serine 717. An actin-binding region spans residues 844–855; sequence KAEPFFIRCIRS. Residues 940–1044 form a neck or regulatory domain region; sequence LKETERQALQ…CRGHLQRKSF (105 aa). 4 IQ domains span residues 957–977, 979–1000, 1001–1023, and 1024–1053; these read VRKI…RHFL, MKRA…RALE, RTQA…LYRH, and QKQS…EKQK. Serine 1045 is modified (phosphoserine). The segment at 1045 to 2157 is tail; sequence SQMISEKQKA…LPPASGQTNG (1113 aa). Residues 1046-1071 are a coiled coil; it reads QMISEKQKAEEKEREALEAARAGAEE. Disordered regions lie at residues 1046-1298, 1320-1410, and 1455-1484; these read QMIS…TQIQ, AAAS…GSQV, and GLEA…KKNR. Basic and acidic residues-rich tracts occupy residues 1050–1063, 1109–1122, 1136–1160, 1168–1183, and 1191–1201; these read EKQK…EALE, SPLE…EAPS, ESHE…EHVK, SCKE…RRVT, and LEDKKESREDE. Phosphoserine is present on residues serine 1114, serine 1115, and serine 1122. A compositionally biased stretch (polar residues) spans 1211–1222; the sequence is ENTSQKQPTEQP. Phosphoserine is present on residues serine 1242, serine 1253, serine 1261, and serine 1267. Residue threonine 1271 is modified to Phosphothreonine. Serine 1290, serine 1323, and serine 1331 each carry phosphoserine. Threonine 1346 bears the Phosphothreonine mark. Phosphoserine is present on residues serine 1354, serine 1356, and serine 1405. The span at 1467 to 1478 shows a compositional bias: basic and acidic residues; it reads AAGEKRTKEPGG. A Phorbol-ester/DAG-type zinc finger spans residues 1632–1681; the sequence is GHVFASYQVSIPQSCEQCLSYIWLMDKALLCSVCKMTCHKKCVHKIQSHC. Positions 1703 to 1888 constitute a Rho-GAP domain; sequence DSLTSDKASV…MLIKEQMRKY (186 aa). The tract at residues 1739–1744 is interaction with RHOA; sequence AANRTR. Residues 1880–1901 are a coiled coil; sequence LIKEQMRKYKVKMEEISQLEAA. Phosphoserine occurs at positions 1926, 1972, 1992, and 1999. A coiled-coil region spans residues 1959–1989; it reads EDREKEILIERIQSIKEEKEDITYRLPELDP. The span at 1980-1993 shows a compositional bias: basic and acidic residues; the sequence is ITYRLPELDPRGSD. A disordered region spans residues 1980–2157; the sequence is ITYRLPELDP…LPPASGQTNG (178 aa). At threonine 2005 the chain carries Phosphothreonine. The span at 2021–2037 shows a compositional bias: pro residues; the sequence is PPAPALPCPGAPTPSPL. Phosphoserine is present on serine 2050. Residues 2081 to 2093 show a composition bias toward low complexity; the sequence is PRWAPGAREAAAP. Residues 2095-2106 show a composition bias toward basic and acidic residues; the sequence is RRREPPARRPDQ. At serine 2141 the chain carries Phosphoserine.

Belongs to the TRAFAC class myosin-kinesin ATPase superfamily. Myosin family. As to quaternary structure, interacts (via IQ domains) with CALM. Interacts with RHOA. Interacts (via Rho-GAP domain) with ROBO1; this inhibits the interaction with RHOA and the stimulation of RHOA GTPase activity, and thereby increases the levels of active RHOA. In terms of tissue distribution, detected in peripheral blood leukocytes (at protein level). Expressed predominantly in peripheral blood leukocytes and at lower levels, in thymus, spleen, testis, prostate, ovary, brain, small intestine and lung.

Its subcellular location is the cytoplasm. The protein resides in the cell cortex. It is found in the perinuclear region. The protein localises to the cytoskeleton. Functionally, myosins are actin-based motor molecules with ATPase activity. Unconventional myosins serve in intracellular movements. Binds actin with high affinity both in the absence and presence of ATP and its mechanochemical activity is inhibited by calcium ions. Also acts as a GTPase activator for RHOA. Plays a role in the regulation of cell migration via its role as RHOA GTPase activator. This is regulated by its interaction with the SLIT2 receptor ROBO1; interaction with ROBO1 impairs interaction with RHOA and subsequent activation of RHOA GTPase activity, and thereby leads to increased levels of active, GTP-bound RHOA. This chain is Unconventional myosin-IXb (MYO9B), found in Homo sapiens (Human).